We begin with the raw amino-acid sequence, 117 residues long: Large ribosomal subunit protein uL18 (117 aa).

This sequence belongs to the universal ribosomal protein uL18 family. Part of the 50S ribosomal subunit; part of the 5S rRNA/L5/L18/L25 subcomplex. Contacts the 5S and 23S rRNAs.

In terms of biological role, this is one of the proteins that bind and probably mediate the attachment of the 5S RNA into the large ribosomal subunit, where it forms part of the central protuberance. In Polynucleobacter asymbioticus (strain DSM 18221 / CIP 109841 / QLW-P1DMWA-1) (Polynucleobacter necessarius subsp. asymbioticus), this protein is Large ribosomal subunit protein uL18.